The sequence spans 97 residues: Putative septation protein SpoVG (97 aa).

The protein belongs to the SpoVG family.

In terms of biological role, could be involved in septation. This is Putative septation protein SpoVG from Anaeromyxobacter sp. (strain Fw109-5).